Here is a 290-residue protein sequence, read N- to C-terminus: Serpentine receptor class U-26 (290 aa).

The next 7 helical transmembrane spans lie at 31–51 (LPMLFLLVPILYIPITIIIIL), 70–90 (LLSAISISQCMCLLFFLADFL), 112–134 (FITILTIFTYHINYSTMIFPFLV), 158–178 (FSIPFICVYPIIFTFFMFPAI), 185–205 (AYPFPFGAIIFRIERTFFGLV), 213–233 (NTLFWMTCCIITNFILLLLLI), and 262–282 (MIFSYLSNAMIVFLLLELHIV).

Belongs to the nematode receptor-like protein sru family.

It localises to the membrane. This chain is Serpentine receptor class U-26 (sru-26), found in Caenorhabditis elegans.